The chain runs to 242 residues: MTQQFYVSPEQVMKDRADFARKGIARGRSVVVVSSLEGIALVAENPSPSLHKIGEIYDKIAFAAVGKYNEFESLRQAGVRYADVRGYSYDRDDVTARGLASVYAQSLGAVFTAEQKPFEVELAVAEVGENQDQDHLYRLTFDGSIADETGFIAMGGQVDSVHQVVAAGWASGSSLADVVGLAVGALGAGREPVVELDAANLEIAVLDRDSETSRGVARAFRRLNANEVNDLLSPRGSGSPAE.

This sequence belongs to the peptidase T1A family. In terms of assembly, the 20S proteasome core is composed of 14 alpha and 14 beta subunits that assemble into four stacked heptameric rings, resulting in a barrel-shaped structure. The two inner rings, each composed of seven catalytic beta subunits, are sandwiched by two outer rings, each composed of seven alpha subunits. The catalytic chamber with the active sites is on the inside of the barrel. Has a gated structure, the ends of the cylinder being occluded by the N-termini of the alpha-subunits. Is capped by the proteasome-associated ATPase, ARC.

It localises to the cytoplasm. Its pathway is protein degradation; proteasomal Pup-dependent pathway. With respect to regulation, the formation of the proteasomal ATPase ARC-20S proteasome complex, likely via the docking of the C-termini of ARC into the intersubunit pockets in the alpha-rings, may trigger opening of the gate for substrate entry. Interconversion between the open-gate and close-gate conformations leads to a dynamic regulation of the 20S proteasome proteolysis activity. Component of the proteasome core, a large protease complex with broad specificity involved in protein degradation. In Renibacterium salmoninarum (strain ATCC 33209 / DSM 20767 / JCM 11484 / NBRC 15589 / NCIMB 2235), this protein is Proteasome subunit alpha.